The primary structure comprises 1052 residues: Protein argonaute 14 (1052 aa).

The segment covering M1–H39 has biased composition (gly residues). Disordered regions lie at residues M1–V127 and G170–S194. The segment covering P40–G49 has biased composition (low complexity). Composition is skewed to gly residues over residues Y50 to G59 and G66 to G81. Residues V97–A117 show a composition bias toward low complexity. Positions P173–I183 are enriched in pro residues. In terms of domain architecture, PAZ spans S394–E510. In terms of domain architecture, Piwi spans L677 to E1009.

This sequence belongs to the argonaute family. Ago subfamily. Expressed in seeds.

Probably involved in the RNA silencing pathway. May bind to short RNAs such as microRNAs (miRNAs) or short interfering RNAs (siRNAs), and represses the translation of mRNAs which are complementary to them. The polypeptide is Protein argonaute 14 (AGO14) (Oryza sativa subsp. japonica (Rice)).